Here is a 127-residue protein sequence, read N- to C-terminus: Nuclear transport factor 2 (127 aa).

K4 is subject to N6-acetyllysine. The region spanning 10–121 (IGSSFIQHYY…WVCTNDMFRL (112 aa)) is the NTF2 domain.

As to quaternary structure, homodimer. Interacts with RAN (GDP-bound form); the interaction is direct and regulates RAN nuclear import. Interacts with the nucleoporins NUP54, NUP58 and NUP62 (via FG repeats); recruits NUTF2 to the nuclear pore complex a step required for NUTF2-mediated GDP-bound RAN nuclear import. Interacts with CAPG; mediates its nuclear import.

The protein resides in the cytoplasm. It is found in the cytosol. It localises to the nucleus outer membrane. The protein localises to the nucleus. Its subcellular location is the nuclear pore complex. The protein resides in the nucleus inner membrane. It is found in the nucleoplasm. In terms of biological role, mediates the import of GDP-bound RAN from the cytoplasm into the nucleus which is essential for the function of RAN in cargo receptor-mediated nucleocytoplasmic transport. Thereby, plays indirectly a more general role in cargo receptor-mediated nucleocytoplasmic transport. Interacts with GDP-bound RAN in the cytosol, recruits it to the nuclear pore complex via its interaction with nucleoporins and promotes its nuclear import. This is Nuclear transport factor 2 from Bos taurus (Bovine).